The chain runs to 394 residues: S-adenosylmethionine synthase (394 aa).

His16 provides a ligand contact to ATP. Asp18 is a Mg(2+) binding site. Glu44 lines the K(+) pocket. Residues Glu57 and Gln99 each coordinate L-methionine. The flexible loop stretch occupies residues 99–109; that stretch reads QSPDIAQGVDE. Residues 173–175, 240–241, Asp249, 255–256, Ala272, and Lys276 contribute to the ATP site; these read DAK, RF, and RK. An L-methionine-binding site is contributed by Asp249. An L-methionine-binding site is contributed by Lys280.

This sequence belongs to the AdoMet synthase family. In terms of assembly, homotetramer; dimer of dimers. Mg(2+) serves as cofactor. It depends on K(+) as a cofactor.

It localises to the cytoplasm. It catalyses the reaction L-methionine + ATP + H2O = S-adenosyl-L-methionine + phosphate + diphosphate. The protein operates within amino-acid biosynthesis; S-adenosyl-L-methionine biosynthesis; S-adenosyl-L-methionine from L-methionine: step 1/1. Functionally, catalyzes the formation of S-adenosylmethionine (AdoMet) from methionine and ATP. The overall synthetic reaction is composed of two sequential steps, AdoMet formation and the subsequent tripolyphosphate hydrolysis which occurs prior to release of AdoMet from the enzyme. This Lacticaseibacillus paracasei (strain ATCC 334 / BCRC 17002 / CCUG 31169 / CIP 107868 / KCTC 3260 / NRRL B-441) (Lactobacillus paracasei) protein is S-adenosylmethionine synthase.